A 34-amino-acid chain; its full sequence is Hemopexin (34 aa).

A disordered region spans residues 1–25; it reads RPLTQHKPHTPGDEHPHGAEPPGXD.

This sequence belongs to the hemopexin family. As to expression, expressed by the liver and secreted in plasma.

It is found in the secreted. Binds heme and transports it to the liver for breakdown and iron recovery, after which the free hemopexin returns to the circulation. The protein is Hemopexin (HPX) of Gallus gallus (Chicken).